A 207-amino-acid chain; its full sequence is Glycerol-3-phosphate acyltransferase (207 aa).

6 consecutive transmembrane segments (helical) span residues 7 to 27 (YALAAVAGYLSGSIPFGLVIV), 58 to 78 (LATFLLDSLKAGLVALAFTLL), 83 to 103 (VGFVAGFAAFIGHCYPVWLGF), 116 to 136 (LAFVSPLHGLVVAAPVWLGLF), 141 to 161 (ISSLAALTAAVAVPPGAWLMG), and 166 to 186 (LILAGLALLSVFVFWTHRENI).

It belongs to the PlsY family. As to quaternary structure, probably interacts with PlsX.

It is found in the cell inner membrane. It catalyses the reaction an acyl phosphate + sn-glycerol 3-phosphate = a 1-acyl-sn-glycero-3-phosphate + phosphate. It participates in lipid metabolism; phospholipid metabolism. Its function is as follows. Catalyzes the transfer of an acyl group from acyl-phosphate (acyl-PO(4)) to glycerol-3-phosphate (G3P) to form lysophosphatidic acid (LPA). This enzyme utilizes acyl-phosphate as fatty acyl donor, but not acyl-CoA or acyl-ACP. This is Glycerol-3-phosphate acyltransferase from Hyphomonas neptunium (strain ATCC 15444).